The primary structure comprises 206 residues: ATP phosphoribosyltransferase (206 aa).

It belongs to the ATP phosphoribosyltransferase family. Short subfamily. Heteromultimer composed of HisG and HisZ subunits.

The protein resides in the cytoplasm. It carries out the reaction 1-(5-phospho-beta-D-ribosyl)-ATP + diphosphate = 5-phospho-alpha-D-ribose 1-diphosphate + ATP. It functions in the pathway amino-acid biosynthesis; L-histidine biosynthesis; L-histidine from 5-phospho-alpha-D-ribose 1-diphosphate: step 1/9. Functionally, catalyzes the condensation of ATP and 5-phosphoribose 1-diphosphate to form N'-(5'-phosphoribosyl)-ATP (PR-ATP). Has a crucial role in the pathway because the rate of histidine biosynthesis seems to be controlled primarily by regulation of HisG enzymatic activity. This Geobacillus sp. (strain WCH70) protein is ATP phosphoribosyltransferase.